Here is a 1126-residue protein sequence, read N- to C-terminus: Stress response protein nst1 (1126 aa).

Residues 1–17 (MSTAAPAASATNSAIPA) show a composition bias toward low complexity. Disordered stretches follow at residues 1-192 (MSTA…STQE), 266-348 (NQGS…ARAA), 404-453 (AAHQ…EQRM), 492-774 (LLEE…NGLP), 823-914 (NGAR…AQRD), 939-965 (LSQS…GPSL), and 1075-1126 (FEPD…PMGF). Basic residues predominate over residues 35-45 (NRKKQKRRQKQ). Positions 96–111 (ANHKDDQDSVDAHDDY) are enriched in basic and acidic residues. Over residues 125 to 136 (TGRKSKKKKGKK) the composition is skewed to basic residues. Positions 291 to 300 (GQHTRTQGQF) are enriched in polar residues. 2 stretches are compositionally biased toward acidic residues: residues 311–344 (PEEE…EDDE) and 419–448 (DEED…DTMT). Residues 479 to 655 (KVAEQRQQKL…KREYQAKRTS (177 aa)) are a coiled coil. Basic and acidic residues-rich tracts occupy residues 492-512 (LLEE…EAQK) and 522-651 (QAKE…EYQA). 2 stretches are compositionally biased toward polar residues: residues 655–670 (SPFS…SSPV) and 694–721 (QPSQ…SVSP). A compositionally biased stretch (low complexity) spans 727–737 (SQSSGASSVAS). 2 stretches are compositionally biased toward polar residues: residues 846–860 (GQQQ…QQSG) and 867–885 (RQPS…TQPM). Over residues 886 to 898 (PISRPSPIKRPSS) the composition is skewed to low complexity. A compositionally biased stretch (basic and acidic residues) spans 902-914 (DQRKNGDRTAQRD). Positions 1115–1126 (VLRQFSSPPMGF) are enriched in polar residues.

This sequence belongs to the NST1 family.

It is found in the cytoplasm. Its function is as follows. May act as a negative regulator of salt tolerance. In Aspergillus clavatus (strain ATCC 1007 / CBS 513.65 / DSM 816 / NCTC 3887 / NRRL 1 / QM 1276 / 107), this protein is Stress response protein nst1 (nst1).